The chain runs to 478 residues: Probable glycine dehydrogenase (decarboxylating) subunit 2 (478 aa).

Lys264 carries the post-translational modification N6-(pyridoxal phosphate)lysine.

Belongs to the GcvP family. C-terminal subunit subfamily. The glycine cleavage system is composed of four proteins: P, T, L and H. In this organism, the P 'protein' is a heterodimer of two subunits. The cofactor is pyridoxal 5'-phosphate.

The catalysed reaction is N(6)-[(R)-lipoyl]-L-lysyl-[glycine-cleavage complex H protein] + glycine + H(+) = N(6)-[(R)-S(8)-aminomethyldihydrolipoyl]-L-lysyl-[glycine-cleavage complex H protein] + CO2. The glycine cleavage system catalyzes the degradation of glycine. The P protein binds the alpha-amino group of glycine through its pyridoxal phosphate cofactor; CO(2) is released and the remaining methylamine moiety is then transferred to the lipoamide cofactor of the H protein. This Endomicrobium trichonymphae protein is Probable glycine dehydrogenase (decarboxylating) subunit 2.